Consider the following 39-residue polypeptide: Photosystem II reaction center protein J (39 aa).

A helical membrane pass occupies residues 7 to 27 (IPLWLVATIGGIAVLTVLGLF).

Belongs to the PsbJ family. In terms of assembly, PSII is composed of 1 copy each of membrane proteins PsbA, PsbB, PsbC, PsbD, PsbE, PsbF, PsbH, PsbI, PsbJ, PsbK, PsbL, PsbM, PsbT, PsbX, PsbY, PsbZ, Psb30/Ycf12, at least 3 peripheral proteins of the oxygen-evolving complex and a large number of cofactors. It forms dimeric complexes.

It is found in the plastid. The protein resides in the chloroplast thylakoid membrane. One of the components of the core complex of photosystem II (PSII). PSII is a light-driven water:plastoquinone oxidoreductase that uses light energy to abstract electrons from H(2)O, generating O(2) and a proton gradient subsequently used for ATP formation. It consists of a core antenna complex that captures photons, and an electron transfer chain that converts photonic excitation into a charge separation. This Cyanidioschyzon merolae (strain NIES-3377 / 10D) (Unicellular red alga) protein is Photosystem II reaction center protein J.